Consider the following 101-residue polypeptide: Small ribosomal subunit protein uS14m (101 aa).

This sequence belongs to the universal ribosomal protein uS14 family. In terms of assembly, component of the mitochondrial ribosome small subunit (28S) which comprises a 12S rRNA and about 30 distinct proteins. Interacts with LIAT1.

The protein resides in the mitochondrion. The polypeptide is Small ribosomal subunit protein uS14m (mrps14) (Dictyostelium discoideum (Social amoeba)).